We begin with the raw amino-acid sequence, 74 residues long: Small ribosomal subunit protein uS15 (74 aa).

Belongs to the universal ribosomal protein uS15 family. As to quaternary structure, part of the 30S ribosomal subunit. Forms a bridge to the 50S subunit in the 70S ribosome, contacting the 23S rRNA.

One of the primary rRNA binding proteins, it binds directly to 16S rRNA where it helps nucleate assembly of the platform of the 30S subunit by binding and bridging several RNA helices of the 16S rRNA. In terms of biological role, forms an intersubunit bridge (bridge B4) with the 23S rRNA of the 50S subunit in the ribosome. This Onion yellows phytoplasma (strain OY-M) protein is Small ribosomal subunit protein uS15.